The chain runs to 415 residues: Serine/threonine-protein kinase H1 homolog (415 aa).

The segment at 1-70 (MGCMSSKLVP…SNRKVKKYRD (70 aa)) is disordered. The span at 41-50 (GPRDPTKDPK) shows a compositional bias: basic and acidic residues. The Protein kinase domain occupies 80-334 (YDIKALIGRG…AADALKHQWL (255 aa)). Residues 86 to 94 (IGRGNFSKV) and Lys-109 contribute to the ATP site. Asp-198 acts as the Proton acceptor in catalysis. Over residues 353–362 (NLIHRQSTRA) the composition is skewed to polar residues. Positions 353-415 (NLIHRQSTRA…DVQADLASLG (63 aa)) are disordered. Over residues 363–385 (NSTKSAKSTRSTKSNKSNRSGRS) the composition is skewed to low complexity. Over residues 386 to 406 (LRSEHRRVMPDEIDELHRDPD) the composition is skewed to basic and acidic residues.

This sequence belongs to the protein kinase superfamily. CAMK Ser/Thr protein kinase family.

The catalysed reaction is L-seryl-[protein] + ATP = O-phospho-L-seryl-[protein] + ADP + H(+). The enzyme catalyses L-threonyl-[protein] + ATP = O-phospho-L-threonyl-[protein] + ADP + H(+). The polypeptide is Serine/threonine-protein kinase H1 homolog (PSKH1) (Pinctada fucata (Akoya pearl oyster)).